A 90-amino-acid polypeptide reads, in one-letter code: DNA-binding protein HU-alpha (90 aa).

It belongs to the bacterial histone-like protein family. In terms of assembly, heterodimer of an alpha and a beta chain.

Histone-like DNA-binding protein which is capable of wrapping DNA to stabilize it, and thus to prevent its denaturation under extreme environmental conditions. This Pseudomonas aeruginosa (strain ATCC 15692 / DSM 22644 / CIP 104116 / JCM 14847 / LMG 12228 / 1C / PRS 101 / PAO1) protein is DNA-binding protein HU-alpha (hupA).